We begin with the raw amino-acid sequence, 458 residues long: tRNA modification GTPase MnmE (458 aa).

(6S)-5-formyl-5,6,7,8-tetrahydrofolate is bound by residues R26, E88, and R127. The TrmE-type G domain maps to G224–F378. N234 lines the K(+) pocket. Residues N234 to S239, T253 to T259, and D278 to G281 each bind GTP. Residue S238 coordinates Mg(2+). Residues T253, I255, and T258 each coordinate K(+). T259 lines the Mg(2+) pocket. K458 is a binding site for (6S)-5-formyl-5,6,7,8-tetrahydrofolate.

Belongs to the TRAFAC class TrmE-Era-EngA-EngB-Septin-like GTPase superfamily. TrmE GTPase family. In terms of assembly, homodimer. Heterotetramer of two MnmE and two MnmG subunits. Requires K(+) as cofactor.

Its subcellular location is the cytoplasm. Exhibits a very high intrinsic GTPase hydrolysis rate. Involved in the addition of a carboxymethylaminomethyl (cmnm) group at the wobble position (U34) of certain tRNAs, forming tRNA-cmnm(5)s(2)U34. The polypeptide is tRNA modification GTPase MnmE (Streptococcus agalactiae serotype Ia (strain ATCC 27591 / A909 / CDC SS700)).